The sequence spans 381 residues: MTTLDQFATDKLARLEAGALRRRLRPTARAPGAVLERDGQRLISFSCNDYLNLSTHPAVIDAAIDAARRHGAGAGASRLVTGDHPLYCALEARLAALKQTEDAVVFGSGFLANTGIIPALMAREDAIFVDELAHACIWAGARLSGAALHVFRHNDLAHLAELLAAHRQAARHAMVVTDGVFSMDGDLAPVGEMLALAKAHDAWLMTDDAHGIGVINEGRGSAHGHDVPLQMGTLSKAVGSYGGYLCASHVVCELIRNRARSFVYTTGLPPAVVGASIAALDLIATDPAMCAAPLAHARRFCAALGLPPAESPIVPLLLGTAERALAAQAVLEAAGFLVAAIRPPTVPEGTARLRFAFTACHAPDDIDRLAQLVHDRILVTA.

Arginine 22 lines the substrate pocket. 109–110 (GF) provides a ligand contact to pyridoxal 5'-phosphate. Histidine 134 serves as a coordination point for substrate. Pyridoxal 5'-phosphate contacts are provided by residues serine 182, 207-210 (DDAH), and 233-236 (TLSK). Lysine 236 carries the post-translational modification N6-(pyridoxal phosphate)lysine. Residue threonine 345 participates in substrate binding.

Belongs to the class-II pyridoxal-phosphate-dependent aminotransferase family. BioF subfamily. In terms of assembly, homodimer. It depends on pyridoxal 5'-phosphate as a cofactor.

The catalysed reaction is 6-carboxyhexanoyl-[ACP] + L-alanine + H(+) = (8S)-8-amino-7-oxononanoate + holo-[ACP] + CO2. It functions in the pathway cofactor biosynthesis; biotin biosynthesis. Functionally, catalyzes the decarboxylative condensation of pimeloyl-[acyl-carrier protein] and L-alanine to produce 8-amino-7-oxononanoate (AON), [acyl-carrier protein], and carbon dioxide. This Acidiphilium cryptum (strain JF-5) protein is Putative 8-amino-7-oxononanoate synthase (bioF).